Reading from the N-terminus, the 346-residue chain is Uroporphyrinogen decarboxylase (346 aa).

Residues 26-30, aspartate 76, tyrosine 153, serine 208, and histidine 323 contribute to the substrate site; that span reads RQAGR.

The protein belongs to the uroporphyrinogen decarboxylase family. As to quaternary structure, homodimer.

Its subcellular location is the cytoplasm. It carries out the reaction uroporphyrinogen III + 4 H(+) = coproporphyrinogen III + 4 CO2. It functions in the pathway porphyrin-containing compound metabolism; protoporphyrin-IX biosynthesis; coproporphyrinogen-III from 5-aminolevulinate: step 4/4. Functionally, catalyzes the decarboxylation of four acetate groups of uroporphyrinogen-III to yield coproporphyrinogen-III. The sequence is that of Uroporphyrinogen decarboxylase from Prochlorococcus marinus (strain MIT 9215).